A 123-amino-acid polypeptide reads, in one-letter code: Ribosome-binding factor A (123 aa).

The protein belongs to the RbfA family. In terms of assembly, monomer. Binds 30S ribosomal subunits, but not 50S ribosomal subunits or 70S ribosomes.

Its subcellular location is the cytoplasm. Functionally, one of several proteins that assist in the late maturation steps of the functional core of the 30S ribosomal subunit. Associates with free 30S ribosomal subunits (but not with 30S subunits that are part of 70S ribosomes or polysomes). Required for efficient processing of 16S rRNA. May interact with the 5'-terminal helix region of 16S rRNA. The polypeptide is Ribosome-binding factor A (Chlamydia trachomatis serovar A (strain ATCC VR-571B / DSM 19440 / HAR-13)).